The primary structure comprises 210 residues: Probable GTP-binding protein EngB (210 aa).

The 175-residue stretch at 25-199 (CGIEVAFAGR…RQKLDSWFSE (175 aa)) folds into the EngB-type G domain. GTP is bound by residues 33 to 40 (GRSNAGKS), 60 to 64 (GRTQL), 78 to 81 (DLPG), 145 to 148 (TKAD), and 178 to 180 (FSS). The Mg(2+) site is built by Ser-40 and Thr-62.

It belongs to the TRAFAC class TrmE-Era-EngA-EngB-Septin-like GTPase superfamily. EngB GTPase family. It depends on Mg(2+) as a cofactor.

Functionally, necessary for normal cell division and for the maintenance of normal septation. The polypeptide is Probable GTP-binding protein EngB (Salmonella agona (strain SL483)).